The chain runs to 197 residues: NADH-quinone oxidoreductase subunit B (197 aa).

Positions 63, 64, 129, and 159 each coordinate [4Fe-4S] cluster.

This sequence belongs to the complex I 20 kDa subunit family. NDH-1 is composed of 14 different subunits. Subunits NuoB, C, D, E, F, and G constitute the peripheral sector of the complex. [4Fe-4S] cluster is required as a cofactor.

The protein resides in the cell inner membrane. It catalyses the reaction a quinone + NADH + 5 H(+)(in) = a quinol + NAD(+) + 4 H(+)(out). Its function is as follows. NDH-1 shuttles electrons from NADH, via FMN and iron-sulfur (Fe-S) centers, to quinones in the respiratory chain. The immediate electron acceptor for the enzyme in this species is believed to be a menaquinone. Couples the redox reaction to proton translocation (for every two electrons transferred, four hydrogen ions are translocated across the cytoplasmic membrane), and thus conserves the redox energy in a proton gradient. The protein is NADH-quinone oxidoreductase subunit B of Bacteroides thetaiotaomicron (strain ATCC 29148 / DSM 2079 / JCM 5827 / CCUG 10774 / NCTC 10582 / VPI-5482 / E50).